The chain runs to 149 residues: Leghemoglobin (149 aa).

Residues 3 to 147 (AFSEKQESLV…LAAAIKKAMG (145 aa)) form the Globin domain. Residue Y31 is modified to Nitrated tyrosine. Residue S46 participates in heme b binding. The residue at position 46 (S46) is a Phosphoserine. H62 lines the O2 pocket. The heme b site is built by K65, H94, and K97. A Nitrated tyrosine modification is found at Y135.

It belongs to the plant globin family. Monomer. Post-translationally, nitrated in effective nodules and particularly in hypoxic conditions; this mechanism may play a protective role in the symbiosis by buffering toxic peroxynitrite NO(2)(-). Nitration level decrease during nodule senescence. Phosphorylation at Ser-46 disrupts the molecular environment of its porphyrin ring oxygen binding pocket, thus leading to a reduced oxygen consumption and to the delivery of oxygen O(2) to symbiosomes. Root nodules.

The protein resides in the cytoplasm. It localises to the cytosol. It is found in the nucleus. Functionally, leghemoglobin that reversibly binds oxygen O(2) through a pentacoordinated heme iron. In root nodules, facilitates the diffusion of oxygen to the bacteroids while preventing the bacterial nitrogenase from being inactivated by buffering dioxygen, nitric oxide and carbon monoxide, and promoting the formation of reactive oxygen species (ROS, e.g. H(2)O(2)). This role is essential for symbiotic nitrogen fixation (SNF). This Canavalia lineata (Beach bean) protein is Leghemoglobin.